Reading from the N-terminus, the 317-residue chain is Lipopolysaccharide heptosyltransferase 1 (317 aa).

Residues Thr-187, Thr-188, Lys-192, Glu-222, Met-242, Asp-261, Thr-262, Gly-263, and His-266 each contribute to the ADP-L-glycero-beta-D-manno-heptose site.

It belongs to the glycosyltransferase 9 family.

It localises to the cell inner membrane. It catalyses the reaction an alpha-Kdo-(2-&gt;4)-alpha-Kdo-(2-&gt;6)-lipid A + ADP-L-glycero-beta-D-manno-heptose = an L-alpha-D-Hep-(1-&gt;5)-[alpha-Kdo-(2-&gt;4)]-alpha-Kdo-(2-&gt;6)-lipid A + ADP + H(+). It participates in bacterial outer membrane biogenesis; LPS core biosynthesis. In terms of biological role, glycosyltransferase involved in the biosynthesis of the core oligosaccharide region of lipopolysaccharide (LPS). Catalyzes the addition of the first heptose unit to one 3-deoxy-D-manno-octulosonic acid (Kdo) residue of the Kdo2-lipid A module. This chain is Lipopolysaccharide heptosyltransferase 1, found in Salmonella typhimurium (strain LT2 / SGSC1412 / ATCC 700720).